The sequence spans 478 residues: Sulfate adenylyltransferase subunit 1 (478 aa).

The region spanning 28–244 (KTMLRFLTCG…LESVDVVNAR (217 aa)) is the tr-type G domain. The interval 37–44 (GSVDDGKS) is G1. 37-44 (GSVDDGKS) is a binding site for GTP. The interval 95–99 (GITID) is G2. The interval 116-119 (DTPG) is G3. Residues 116 to 120 (DTPGH) and 171 to 174 (NKMD) each bind GTP. The G4 stretch occupies residues 171–174 (NKMD). A G5 region spans residues 209–211 (SAL).

Belongs to the TRAFAC class translation factor GTPase superfamily. Classic translation factor GTPase family. CysN/NodQ subfamily. As to quaternary structure, heterodimer composed of CysD, the smaller subunit, and CysN.

It catalyses the reaction sulfate + ATP + H(+) = adenosine 5'-phosphosulfate + diphosphate. Its pathway is sulfur metabolism; hydrogen sulfide biosynthesis; sulfite from sulfate: step 1/3. Its function is as follows. With CysD forms the ATP sulfurylase (ATPS) that catalyzes the adenylation of sulfate producing adenosine 5'-phosphosulfate (APS) and diphosphate, the first enzymatic step in sulfur assimilation pathway. APS synthesis involves the formation of a high-energy phosphoric-sulfuric acid anhydride bond driven by GTP hydrolysis by CysN coupled to ATP hydrolysis by CysD. The chain is Sulfate adenylyltransferase subunit 1 from Yersinia pseudotuberculosis serotype O:1b (strain IP 31758).